A 1788-amino-acid chain; its full sequence is Protein Shroom3 (1788 aa).

16 disordered regions span residues 1-25, 146-174, 225-263, 321-367, 382-401, 469-488, 498-548, 727-768, 793-821, 876-915, 1011-1067, 1086-1133, 1171-1263, 1303-1324, 1404-1467, and 1507-1538; these read MMQV…STSD, EVNS…HGRL, KAAG…ESSP, GAKS…KQEG, PDIS…PLRL, NIAS…QADH, TVHA…GNKL, EISP…VTPT, TAEQ…APLT, TGRR…SMNS, SRRH…SASN, SFKN…PETK, KRGK…SEAE, DTES…PPSL, VPAP…AKSQ, and ALKE…KRET. Polar residues-rich tracts occupy residues 147 to 161 and 230 to 240; these read VNSS…SRQP and HSTNTSSNAAQ. Basic and acidic residues-rich tracts occupy residues 245–259 and 357–366; these read VHGD…ERSP and SVKEREKKQE. Residues 476 to 488 show a composition bias toward basic and acidic residues; it reads NKMDERSNRQADH. Residues 708–811 enclose the ASD1 domain; that stretch reads VKDAQCKVLE…SEPEKMNEVG (104 aa). Positions 793–808 are enriched in basic and acidic residues; the sequence is TAEQKKRSYSEPEKMN. Positions 893–903 are enriched in polar residues; that stretch reads QSTYFSGSIMD. A compositionally biased stretch (low complexity) spans 904 to 915; sequence NQSMTSTSSMNS. Polar residues-rich tracts occupy residues 1055-1067, 1100-1124, and 1211-1263; these read EVGN…SASN, ENSS…SISG, and TSAQ…SEAE. Over residues 1313-1323 the composition is skewed to pro residues; sequence PPSPPPFPPPS. A compositionally biased stretch (polar residues) spans 1433 to 1451; the sequence is SILQSSEGNFNPSDSQSTL. Residues 1467–1756 enclose the ASD2 domain; the sequence is QELAKEIVTK…QLRCLTESLP (290 aa). A compositionally biased stretch (basic and acidic residues) spans 1529–1538; the sequence is SEXKEEKRET. Positions 1653-1708 form a coiled coil; it reads RLARVENALSSLGEDASAEERKTWNEKKKQLCGQHEDARELKENLDRREKLVMDFL.

It belongs to the shroom family. As to quaternary structure, interacts with F-actin. Interacts with ROCK1. In terms of tissue distribution, expressed in epithelial cells of the cement gland.

It is found in the cell junction. It localises to the adherens junction. The protein localises to the cytoplasm. The protein resides in the cytoskeleton. Its subcellular location is the apical cell membrane. Controls cell shape changes in the neuroepithelium during neural tube closure. Induces apical constriction in epithelial cells by promoting the apical accumulation of F-actin and myosin II, and probably by bundling stress fibers. Induces apicobasal cell elongation by redistributing gamma-tubulin and directing the assembly of robust apicobasal microtubule arrays. The sequence is that of Protein Shroom3 (shroom3) from Xenopus laevis (African clawed frog).